A 423-amino-acid chain; its full sequence is Probable sucrose-phosphate synthase (423 aa).

It belongs to the glycosyltransferase 1 family.

The enzyme catalyses beta-D-fructose 6-phosphate + UDP-alpha-D-glucose = sucrose 6(F)-phosphate + UDP + H(+). Its function is as follows. Plays a role in sucrose synthesis by catalyzing the first step of sucrose biosynthesis from UDP-glucose and fructose-6-phosphate. The protein is Probable sucrose-phosphate synthase of Thermosipho melanesiensis (strain DSM 12029 / CIP 104789 / BI429).